The sequence spans 370 residues: Queuine tRNA-ribosyltransferase (370 aa).

The Proton acceptor role is filled by aspartate 92. Substrate is bound by residues aspartate 92–phenylalanine 96, aspartate 146, glutamine 190, and glycine 217. Residues glycine 248–asparagine 254 are RNA binding. Residue aspartate 267 is the Nucleophile of the active site. Residues cysteine 305, cysteine 307, cysteine 310, and histidine 336 each contribute to the Zn(2+) site.

Belongs to the queuine tRNA-ribosyltransferase family. As to quaternary structure, homodimer. Within each dimer, one monomer is responsible for RNA recognition and catalysis, while the other monomer binds to the replacement base PreQ1. It depends on Zn(2+) as a cofactor.

The catalysed reaction is 7-aminomethyl-7-carbaguanine + guanosine(34) in tRNA = 7-aminomethyl-7-carbaguanosine(34) in tRNA + guanine. The protein operates within tRNA modification; tRNA-queuosine biosynthesis. Its function is as follows. Catalyzes the base-exchange of a guanine (G) residue with the queuine precursor 7-aminomethyl-7-deazaguanine (PreQ1) at position 34 (anticodon wobble position) in tRNAs with GU(N) anticodons (tRNA-Asp, -Asn, -His and -Tyr). Catalysis occurs through a double-displacement mechanism. The nucleophile active site attacks the C1' of nucleotide 34 to detach the guanine base from the RNA, forming a covalent enzyme-RNA intermediate. The proton acceptor active site deprotonates the incoming PreQ1, allowing a nucleophilic attack on the C1' of the ribose to form the product. After dissociation, two additional enzymatic reactions on the tRNA convert PreQ1 to queuine (Q), resulting in the hypermodified nucleoside queuosine (7-(((4,5-cis-dihydroxy-2-cyclopenten-1-yl)amino)methyl)-7-deazaguanosine). The sequence is that of Queuine tRNA-ribosyltransferase from Desulforapulum autotrophicum (strain ATCC 43914 / DSM 3382 / VKM B-1955 / HRM2) (Desulfobacterium autotrophicum).